A 397-amino-acid chain; its full sequence is Lysosomal acid lipase/cholesteryl ester hydrolase (397 aa).

An N-terminal signal peptide occupies residues 1-25; it reads MQLLGRVICFVVGILLSGGPTGTIS. A propeptide spans 26-72 (removed in mature form); it reads AVDPEANMNVTEIIMHWGYPEHSVQTGDGYILGVHRIPHGRKNQFDK. N-linked (GlcNAc...) asparagine glycans are attached at residues asparagine 34, asparagine 99, and asparagine 159. In terms of domain architecture, AB hydrolase-1 spans 84 to 378; sequence HGFLADSSNW…EWDHLDFIWG (295 aa). The Charge relay system role is filled by serine 172. N-linked (GlcNAc...) asparagine glycans are attached at residues asparagine 271 and asparagine 319. The active-site Charge relay system is the histidine 372.

Belongs to the AB hydrolase superfamily. Lipase family. In terms of assembly, monomer. Glycosylation is not essential for catalytic activity.

The protein localises to the lysosome. The enzyme catalyses a sterol ester + H2O = a sterol + a fatty acid + H(+). It carries out the reaction cholesteryl (9Z-octadecenoate) + H2O = cholesterol + (9Z)-octadecenoate + H(+). It catalyses the reaction a triacylglycerol + H2O = a 1,2-diacylglycerol + a fatty acid + H(+). The catalysed reaction is 1,2-di-(9Z-octadecenoyl)-glycerol + (9Z)-octadecenoate + H(+) = 1,2,3-tri-(9Z-octadecenoyl)-glycerol + H2O. The enzyme catalyses a 1,2-diacylglycerol + H2O = a 1-acylglycerol + a fatty acid + H(+). It carries out the reaction 1,2-di-(9Z-octadecenoyl)-glycerol + H2O = 1-(9Z-octadecenoyl)-glycerol + (9Z)-octadecenoate + H(+). It catalyses the reaction a 1,3-diacylglycerol + H2O = a 1-acylglycerol + a fatty acid + H(+). The catalysed reaction is 1,3-di-(9Z-octadecenoyl)-glycerol + H2O = 1-(9Z-octadecenoyl)-glycerol + (9Z)-octadecenoate + H(+). Functionally, catalyzes the deacylation of cholesteryl ester core lipids of endocytosed low density lipoproteins to generate free fatty acids and cholesterol. Hydrolyzes triglycerides (1,2,3-triacylglycerol) and diglycerides (such as 1,2-diacylglycerol and 1,3-diacylglycerol) with preference for the acyl moieties at the sn-1 or sn-3 positions. The chain is Lysosomal acid lipase/cholesteryl ester hydrolase (Lipa) from Rattus norvegicus (Rat).